The chain runs to 228 residues: Ribonuclease 3 (228 aa).

In terms of domain architecture, RNase III spans 8 to 130 (LKRLERRVDY…IIGAAFLDSD (123 aa)). A Mg(2+)-binding site is contributed by glutamate 43. Aspartate 47 is an active-site residue. Residues aspartate 116 and glutamate 119 each contribute to the Mg(2+) site. The active site involves glutamate 119. Residues 157 to 226 (DPKTRLQEHL…ANKMLDSLSG (70 aa)) enclose the DRBM domain.

The protein belongs to the ribonuclease III family. As to quaternary structure, homodimer. Requires Mg(2+) as cofactor.

The protein localises to the cytoplasm. It catalyses the reaction Endonucleolytic cleavage to 5'-phosphomonoester.. Functionally, digests double-stranded RNA. Involved in the processing of primary rRNA transcript to yield the immediate precursors to the large and small rRNAs (23S and 16S). Processes some mRNAs, and tRNAs when they are encoded in the rRNA operon. Processes pre-crRNA and tracrRNA of type II CRISPR loci if present in the organism. The protein is Ribonuclease 3 of Psychromonas ingrahamii (strain DSM 17664 / CCUG 51855 / 37).